The sequence spans 322 residues: Malate dehydrogenase (322 aa).

NAD(+)-binding positions include 10 to 15 (GSGQIG) and Asp-34. Substrate is bound by residues Arg-83 and Arg-89. NAD(+) contacts are provided by residues Asn-96 and 119 to 121 (ITN). Positions 121 and 152 each coordinate substrate. His-176 (proton acceptor) is an active-site residue.

Belongs to the LDH/MDH superfamily. MDH type 3 family.

The enzyme catalyses (S)-malate + NAD(+) = oxaloacetate + NADH + H(+). Its function is as follows. Catalyzes the reversible oxidation of malate to oxaloacetate. The chain is Malate dehydrogenase from Nitrobacter hamburgensis (strain DSM 10229 / NCIMB 13809 / X14).